The sequence spans 333 residues: Ribosomal protein L11 methyltransferase (333 aa).

S-adenosyl-L-methionine is bound by residues threonine 181, glycine 202, aspartate 224, and asparagine 268.

The protein belongs to the methyltransferase superfamily. PrmA family.

It is found in the cytoplasm. It catalyses the reaction L-lysyl-[protein] + 3 S-adenosyl-L-methionine = N(6),N(6),N(6)-trimethyl-L-lysyl-[protein] + 3 S-adenosyl-L-homocysteine + 3 H(+). Methylates ribosomal protein L11. In Helicobacter pylori (strain ATCC 700392 / 26695) (Campylobacter pylori), this protein is Ribosomal protein L11 methyltransferase.